Here is a 573-residue protein sequence, read N- to C-terminus: Protein FAM200A (573 aa).

The tract at residues 1-51 (MTPESRDTTDLSPGGTQEMEGIVIVKVEEEDEEDHFQKERNKVESSPQVLS) is disordered. The Extracellular portion of the chain corresponds to 1-513 (MTPESRDTTD…DDFPLLSRKS (513 aa)). A helical transmembrane segment spans residues 514–533 (ILLLLPFTTTYLCELGFSIL). At 534-573 (TRLKTKKRNRLNSAPDMRVALSSCVPDWKELMNRQAHPSH) the chain is on the cytoplasmic side.

Belongs to the FAM200 family.

The protein resides in the membrane. The polypeptide is Protein FAM200A (FAM200A) (Homo sapiens (Human)).